Reading from the N-terminus, the 477-residue chain is Serine/threonine-protein kinase pakC (477 aa).

Positions 13–108 constitute a PH domain; that stretch reads SPDKEGELKK…WMKAVEKGSE (96 aa). Residues 112–125 enclose the CRIB domain; that stretch reads VSQPFNLKHEVHVD. The 255-residue stretch at 204 to 458 folds into the Protein kinase domain; it reads YKNMTKIGEG…ATDLLKHPFM (255 aa). ATP-binding positions include 210–218 and K233; that span reads IGEGAAGEV. D326 (proton acceptor) is an active-site residue.

It belongs to the protein kinase superfamily. STE Ser/Thr protein kinase family. STE20 subfamily. As to quaternary structure, interacts with GTP-bound racB. Mg(2+) is required as a cofactor.

It localises to the cytoplasm. It is found in the membrane. It catalyses the reaction L-seryl-[protein] + ATP = O-phospho-L-seryl-[protein] + ADP + H(+). It carries out the reaction L-threonyl-[protein] + ATP = O-phospho-L-threonyl-[protein] + ADP + H(+). Kinase activity is rapidly and transiently increased in response to chemoattractant stimulation. Has role in the regulation of chemotaxis. The polypeptide is Serine/threonine-protein kinase pakC (pakC) (Dictyostelium discoideum (Social amoeba)).